The chain runs to 343 residues: Isopentenyl-diphosphate delta-isomerase (343 aa).

9–10 (RK) contacts substrate. Residues Ser-66, 67–69 (SMT), Ser-98, and Asn-126 contribute to the FMN site. Position 98–100 (98–100 (SQR)) interacts with substrate. Gln-161 is a substrate binding site. Position 162 (Glu-162) interacts with Mg(2+). FMN-binding positions include Lys-193, Thr-223, 273-275 (GIR), and 294-295 (AA).

Belongs to the IPP isomerase type 2 family. Homooctamer. Dimer of tetramers. Requires FMN as cofactor. NADPH serves as cofactor. Mg(2+) is required as a cofactor.

It is found in the cytoplasm. The catalysed reaction is isopentenyl diphosphate = dimethylallyl diphosphate. In terms of biological role, involved in the biosynthesis of isoprenoids. Catalyzes the 1,3-allylic rearrangement of the homoallylic substrate isopentenyl (IPP) to its allylic isomer, dimethylallyl diphosphate (DMAPP). This Hydrogenovibrio crunogenus (strain DSM 25203 / XCL-2) (Thiomicrospira crunogena) protein is Isopentenyl-diphosphate delta-isomerase.